A 286-amino-acid chain; its full sequence is tRNA (guanine-N(7)-)-methyltransferase (286 aa).

The disordered stretch occupies residues 1–22; it reads MGRARPKSQKRGDYRVSRSQEN. Residues Gly-104, 127–128, 162–163, and Cys-182 each bind S-adenosyl-L-methionine; these read EI and NS. Asp-185 is an active-site residue. 260 to 262 contributes to the S-adenosyl-L-methionine binding site; it reads TEE.

Belongs to the class I-like SAM-binding methyltransferase superfamily. TrmB family. In terms of assembly, forms a complex with TRM82.

Its subcellular location is the nucleus. The catalysed reaction is guanosine(46) in tRNA + S-adenosyl-L-methionine = N(7)-methylguanosine(46) in tRNA + S-adenosyl-L-homocysteine. Its pathway is tRNA modification; N(7)-methylguanine-tRNA biosynthesis. In terms of biological role, catalyzes the formation of N(7)-methylguanine at position 46 (m7G46) in tRNA. This chain is tRNA (guanine-N(7)-)-methyltransferase, found in Colletotrichum orbiculare (strain 104-T / ATCC 96160 / CBS 514.97 / LARS 414 / MAFF 240422) (Cucumber anthracnose fungus).